Reading from the N-terminus, the 119-residue chain is Large ribosomal subunit protein bL20 (119 aa).

Belongs to the bacterial ribosomal protein bL20 family.

Binds directly to 23S ribosomal RNA and is necessary for the in vitro assembly process of the 50S ribosomal subunit. It is not involved in the protein synthesizing functions of that subunit. The chain is Large ribosomal subunit protein bL20 from Nitrobacter winogradskyi (strain ATCC 25391 / DSM 10237 / CIP 104748 / NCIMB 11846 / Nb-255).